We begin with the raw amino-acid sequence, 78 residues long: MSRVCQVTGKRPVTGNNRSHARNATKRRFLPNLQTHRFWVESEKRFVKLRLSAKGMRIIDKKGIDTVLADMRARGENV.

A disordered region spans residues 1–20 (MSRVCQVTGKRPVTGNNRSH).

The protein belongs to the bacterial ribosomal protein bL28 family.

In Vibrio campbellii (strain ATCC BAA-1116), this protein is Large ribosomal subunit protein bL28.